Reading from the N-terminus, the 351-residue chain is MGNLFMLWAALGICCAAFSASAWSVNNFLITGPKAYLTYTTSVALGAQSGIEECKFQFAWERWNCPENALQLSTHNRLRSATRETSFIHAISSAGVMYIITKNCSMGDFENCGCDGSNNGKTGGHGWIWGGCSDNVEFGERISKLFVDSLEKGKDARALMNLHNNRAGRLAVRATMKRTCKCHGISGSCSIQTCWLQLAEFREMGDYLKAKYDQALKIEMDKRQLRAGNSAEGHWVPAEAFLPSAEAELIFLEESPDYCTCNSSLGIYGTEGRECLQNSHNTSRWERRSCGRLCTECGLQVEERKTEVISSCNCKFQWCCTVKCDQCRHVVSKYYCARSPGSAQSLGKGSA.

Residues M1–S24 form the signal peptide. A disulfide bridge connects residues C54 and C65. N103 is a glycosylation site (N-linked (GlcNAc...) asparagine). 10 disulfide bridges follow: C104–C112, C114–C132, C180–C194, C182–C189, C259–C297, C275–C290, C294–C336, C312–C327, C314–C324, and C319–C320. Residue S186 is the site of O-palmitoleoyl serine attachment. N-linked (GlcNAc...) asparagine glycans are attached at residues N262 and N281.

Belongs to the Wnt family. As to quaternary structure, forms a soluble 1:1 complex with AFM; this prevents oligomerization and is required for prolonged biological activity. The complex with AFM may represent the physiological form in body fluids. Post-translationally, palmitoleoylation is required for efficient binding to frizzled receptors. Depalmitoleoylation leads to Wnt signaling pathway inhibition. In terms of processing, proteolytic processing by TIKI1 and TIKI2 promotes oxidation and formation of large disulfide-bond oligomers, leading to inactivation of WNT8A.

The protein localises to the secreted. It localises to the extracellular space. It is found in the extracellular matrix. Functionally, ligand for members of the frizzled family of seven transmembrane receptors. Plays a role in embryonic patterning. This chain is Protein Wnt-8a (WNT8A), found in Homo sapiens (Human).